The sequence spans 148 residues: Protoporphyrinogen IX oxidase (148 aa).

The next 4 membrane-spanning stretches (helical) occupy residues 7-27 (YFLW…AALF), 58-78 (SFIA…MLLI), 86-106 (GGWL…HFYC), and 128-148 (FNEA…VKPF). His-15 contributes to the heme binding site. Lys-92 provides a ligand contact to heme.

This sequence belongs to the HemJ family. In terms of assembly, homodimer. Heme b is required as a cofactor.

Its subcellular location is the cell membrane. It carries out the reaction protoporphyrinogen IX + 3 A = protoporphyrin IX + 3 AH2. Its pathway is porphyrin-containing compound metabolism; protoporphyrin-IX biosynthesis; protoporphyrin-IX from protoporphyrinogen-IX: step 1/1. In terms of biological role, catalyzes the oxidation of protoporphyrinogen IX to protoporphyrin IX. Is involved in the biosynthesis of tetrapyrrole molecules like heme. Does not use oxygen or artificial electron acceptors such as menadione or benzoquinone. This is Protoporphyrinogen IX oxidase from Helicobacter pylori (strain ATCC 700392 / 26695) (Campylobacter pylori).